The primary structure comprises 481 residues: Glutamyl-tRNA(Gln) amidotransferase subunit A (481 aa).

Residues lysine 76 and serine 151 each act as charge relay system in the active site. Serine 175 serves as the catalytic Acyl-ester intermediate.

Belongs to the amidase family. GatA subfamily. As to quaternary structure, heterotrimer of A, B and C subunits.

The catalysed reaction is L-glutamyl-tRNA(Gln) + L-glutamine + ATP + H2O = L-glutaminyl-tRNA(Gln) + L-glutamate + ADP + phosphate + H(+). Allows the formation of correctly charged Gln-tRNA(Gln) through the transamidation of misacylated Glu-tRNA(Gln) in organisms which lack glutaminyl-tRNA synthetase. The reaction takes place in the presence of glutamine and ATP through an activated gamma-phospho-Glu-tRNA(Gln). The chain is Glutamyl-tRNA(Gln) amidotransferase subunit A from Neisseria meningitidis serogroup C (strain 053442).